The following is a 505-amino-acid chain: 2,3-bisphosphoglycerate-independent phosphoglycerate mutase (505 aa).

Residues Asp11 and Ser61 each contribute to the Mn(2+) site. Ser61 functions as the Phosphoserine intermediate in the catalytic mechanism. Substrate contacts are provided by residues His122, 152–153 (RD), Arg183, Arg189, 259–262 (RTDR), and Lys332. Residues Asp399, His403, Asp440, His441, and His458 each contribute to the Mn(2+) site.

This sequence belongs to the BPG-independent phosphoglycerate mutase family. Monomer. Requires Mn(2+) as cofactor.

The enzyme catalyses (2R)-2-phosphoglycerate = (2R)-3-phosphoglycerate. It functions in the pathway carbohydrate degradation; glycolysis; pyruvate from D-glyceraldehyde 3-phosphate: step 3/5. Catalyzes the interconversion of 2-phosphoglycerate and 3-phosphoglycerate. In Flavobacterium johnsoniae (strain ATCC 17061 / DSM 2064 / JCM 8514 / BCRC 14874 / CCUG 350202 / NBRC 14942 / NCIMB 11054 / UW101) (Cytophaga johnsonae), this protein is 2,3-bisphosphoglycerate-independent phosphoglycerate mutase.